We begin with the raw amino-acid sequence, 117 residues long: Putative pterin-4-alpha-carbinolamine dehydratase (117 aa).

Belongs to the pterin-4-alpha-carbinolamine dehydratase family.

The enzyme catalyses (4aS,6R)-4a-hydroxy-L-erythro-5,6,7,8-tetrahydrobiopterin = (6R)-L-erythro-6,7-dihydrobiopterin + H2O. The chain is Putative pterin-4-alpha-carbinolamine dehydratase from Azoarcus sp. (strain BH72).